The sequence spans 255 residues: Thiazole synthase (255 aa).

Lys-95 serves as the catalytic Schiff-base intermediate with DXP. 1-deoxy-D-xylulose 5-phosphate is bound by residues Gly-156, 182 to 183 (AG), and 204 to 205 (NT).

It belongs to the ThiG family. In terms of assembly, homotetramer. Forms heterodimers with either ThiH or ThiS.

The protein localises to the cytoplasm. The catalysed reaction is [ThiS sulfur-carrier protein]-C-terminal-Gly-aminoethanethioate + 2-iminoacetate + 1-deoxy-D-xylulose 5-phosphate = [ThiS sulfur-carrier protein]-C-terminal Gly-Gly + 2-[(2R,5Z)-2-carboxy-4-methylthiazol-5(2H)-ylidene]ethyl phosphate + 2 H2O + H(+). Its pathway is cofactor biosynthesis; thiamine diphosphate biosynthesis. Functionally, catalyzes the rearrangement of 1-deoxy-D-xylulose 5-phosphate (DXP) to produce the thiazole phosphate moiety of thiamine. Sulfur is provided by the thiocarboxylate moiety of the carrier protein ThiS. In vitro, sulfur can be provided by H(2)S. The chain is Thiazole synthase from Vibrio parahaemolyticus serotype O3:K6 (strain RIMD 2210633).